Reading from the N-terminus, the 513-residue chain is Alanine--glyoxylate aminotransferase 2, mitochondrial (513 aa).

The N-terminal 40 residues, 1-40 (MSLAWRNLQKPFYLETSLRILQMRPSLSLGASRIAVPKLT), are a transit peptide targeting the mitochondrion. Lys56 bears the N6-acetyllysine mark. Lys70 carries the N6-acetyllysine; alternate modification. Lys70 is subject to N6-succinyllysine; alternate. Lys83 carries the N6-acetyllysine modification. The residue at position 261 (Lys261) is an N6-acetyllysine; alternate. The residue at position 261 (Lys261) is an N6-succinyllysine; alternate. Lys303 bears the N6-succinyllysine mark. At Lys349 the chain carries N6-(pyridoxal phosphate)lysine. An N6-acetyllysine; alternate mark is found at Lys416 and Lys419. N6-succinyllysine; alternate occurs at positions 416 and 419. Position 453 is an N6-acetyllysine (Lys453).

Belongs to the class-III pyridoxal-phosphate-dependent aminotransferase family. In terms of assembly, homotetramer. Pyridoxal 5'-phosphate serves as cofactor. In terms of tissue distribution, expressed in the liver and kidney.

The protein localises to the mitochondrion. It catalyses the reaction glyoxylate + L-alanine = glycine + pyruvate. It carries out the reaction (R)-3-amino-2-methylpropanoate + pyruvate = 2-methyl-3-oxopropanoate + L-alanine. The catalysed reaction is 3-oxopropanoate + L-alanine = beta-alanine + pyruvate. The enzyme catalyses 2-oxobutanoate + L-alanine = (2S)-2-aminobutanoate + pyruvate. It catalyses the reaction N(omega),N(omega)-dimethyl-L-arginine + pyruvate = 5-(3,3-dimethylguanidino)-2-oxopentanoate + L-alanine. It carries out the reaction N(omega),N('omega)-dimethyl-L-arginine + pyruvate = 5-(3,3'-dimethylguanidino)-2-oxopentanoate + L-alanine. The catalysed reaction is N(omega),N(omega)-dimethyl-L-arginine + glyoxylate = 5-(3,3-dimethylguanidino)-2-oxopentanoate + glycine. The enzyme catalyses N(omega),N('omega)-dimethyl-L-arginine + glyoxylate = 5-(3,3'-dimethylguanidino)-2-oxopentanoate + glycine. It catalyses the reaction N(omega)-methyl-L-arginine + pyruvate = 5-(3-methylguanidino)-2-oxopentanoate + L-alanine. It carries out the reaction N(omega)-methyl-L-arginine + glyoxylate = 5-(3-methylguanidino)-2-oxopentanoate + glycine. The catalysed reaction is L-ornithine + pyruvate = 5-amino-2-oxopentanoate + L-alanine. The enzyme catalyses L-ornithine + glyoxylate = 5-amino-2-oxopentanoate + glycine. It catalyses the reaction (2S)-2-aminobutanoate + glyoxylate = 2-oxobutanoate + glycine. It carries out the reaction N(omega),N(omega)-dimethyl-L-arginine + oxaloacetate = 5-(3,3-dimethylguanidino)-2-oxopentanoate + L-aspartate. The catalysed reaction is oxaloacetate + L-alanine = L-aspartate + pyruvate. The enzyme catalyses N(omega),N(omega)-dimethyl-L-arginine + 2-oxobutanoate = 5-(3,3-dimethylguanidino)-2-oxopentanoate + (2S)-2-aminobutanoate. It catalyses the reaction 2-oxopentanoate + N(omega),N(omega)-dimethyl-L-arginine = 5-(3,3-dimethylguanidino)-2-oxopentanoate + L-2-aminopentanoate. It carries out the reaction 2-oxohexanoate + N(omega),N(omega)-dimethyl-L-arginine = L-2-aminohexanoate + 5-(3,3-dimethylguanidino)-2-oxopentanoate. Its activity is regulated as follows. (R)-3-amino-2-methylpropionate--pyruvate transaminase and beta-alanine-pyruvate aminotransferase are inhibited by aminooxyacetic acid. In terms of biological role, multifunctional aminotransferase with a broad substrate specificity. Catalyzes the conversion of glyoxylate to glycine using alanine as the amino donor. Catalyzes metabolism of not L- but the D-isomer of D-beta-aminoisobutyric acid to generate 2-methyl-3-oxopropanoate and alanine. Catalyzes the transfer of the amino group from beta-alanine to pyruvate to yield L-alanine and 3-oxopropanoate. Can metabolize NG-monomethyl-L-arginine (NMMA), asymmetric NG,NG-dimethyl-L-arginine (ADMA) and symmetric NG,N'G-dimethyl-L-arginine (SDMA). ADMA is a potent inhibitor of nitric-oxide (NO) synthase, and this activity provides mechanism through which the kidney regulates blood pressure. The protein is Alanine--glyoxylate aminotransferase 2, mitochondrial (Agxt2) of Mus musculus (Mouse).